We begin with the raw amino-acid sequence, 307 residues long: Membrane protein insertase YidC 2 (307 aa).

An N-terminal signal peptide occupies residues 1–23 (MKLTLNRILFSGLALSILLTLTG). Cysteine 24 carries the N-palmitoyl cysteine lipid modification. Residue cysteine 24 is the site of S-diacylglycerol cysteine attachment. 5 helical membrane-spanning segments follow: residues 58-78 (LGYGLAIIIVTIIVRTLILPL), 135-155 (LGGIGCLPLLIQMPFFSAMYF), 179-199 (VLTAIIAALYFFQSWLSMMAV), 209-225 (TMMYTMPIMMIFMSFSL), and 231-251 (LYWLVGGFFSIIQQLITTYLL). The tract at residues 263-307 (YAKNPPKAYQSTSSRKDVTPSQNMEQANLPKKIKSNRNAGKQRKR) is disordered. Residues 271 to 288 (YQSTSSRKDVTPSQNMEQ) show a composition bias toward polar residues. The span at 293-307 (KKIKSNRNAGKQRKR) shows a compositional bias: basic residues.

It belongs to the OXA1/ALB3/YidC family. Type 2 subfamily.

It is found in the cell membrane. Its function is as follows. Required for the insertion and/or proper folding and/or complex formation of integral membrane proteins into the membrane. Involved in integration of membrane proteins that insert both dependently and independently of the Sec translocase complex, as well as at least some lipoproteins. This is Membrane protein insertase YidC 2 from Streptococcus pyogenes serotype M1.